The following is a 300-amino-acid chain: Ribosomal protein bS6--L-glutamate ligase (300 aa).

The ATP-grasp domain occupies 104-287 (MQLLARQGID…IAGKMIRWIE (184 aa)). ATP is bound by residues K141, 178-179 (EY), D187, and 211-213 (RSN). Mg(2+) is bound by residues D248, E260, and N262. D248, E260, and N262 together coordinate Mn(2+).

The protein belongs to the RimK family. The cofactor is Mg(2+). Mn(2+) serves as cofactor.

An L-glutamate ligase that catalyzes the ATP-dependent post-translational addition of glutamate residues to the C-terminus of ribosomal protein bS6 (RpsF). Is also able to catalyze the synthesis of poly-alpha-glutamate in vitro, via ATP hydrolysis from unprotected glutamate as substrate. The number of glutamate residues added to either RpsF or to poly-alpha-glutamate changes with pH. The polypeptide is Ribosomal protein bS6--L-glutamate ligase (Escherichia coli O7:K1 (strain IAI39 / ExPEC)).